Consider the following 495-residue polypeptide: Lysine--tRNA ligase (495 aa).

2 residues coordinate Mg(2+): glutamate 406 and glutamate 413.

Belongs to the class-II aminoacyl-tRNA synthetase family. Homodimer. Mg(2+) serves as cofactor.

The protein localises to the cytoplasm. It catalyses the reaction tRNA(Lys) + L-lysine + ATP = L-lysyl-tRNA(Lys) + AMP + diphosphate. The chain is Lysine--tRNA ligase from Leptospira borgpetersenii serovar Hardjo-bovis (strain JB197).